Here is a 152-residue protein sequence, read N- to C-terminus: Sec-independent protein translocase protein TatB (152 aa).

The helical transmembrane segment at 1–21 (MFGISFSELLLVGLVALLVLG) threads the bilayer. A compositionally biased stretch (low complexity) spans 98 to 115 (HAPGAATVAEAPPASEVP). The tract at residues 98–152 (HAPGAATVAEAPPASEVPAPLPSTPAPAPTAEPAAPVATPATTAPHDSTLPPRAP) is disordered. Positions 116 to 127 (APLPSTPAPAPT) are enriched in pro residues. Residues 128-142 (AEPAAPVATPATTAP) are compositionally biased toward low complexity.

Belongs to the TatB family. As to quaternary structure, the Tat system comprises two distinct complexes: a TatABC complex, containing multiple copies of TatA, TatB and TatC subunits, and a separate TatA complex, containing only TatA subunits. Substrates initially bind to the TatABC complex, which probably triggers association of the separate TatA complex to form the active translocon.

It is found in the cell inner membrane. Functionally, part of the twin-arginine translocation (Tat) system that transports large folded proteins containing a characteristic twin-arginine motif in their signal peptide across membranes. Together with TatC, TatB is part of a receptor directly interacting with Tat signal peptides. TatB may form an oligomeric binding site that transiently accommodates folded Tat precursor proteins before their translocation. This Pseudomonas fluorescens (strain ATCC BAA-477 / NRRL B-23932 / Pf-5) protein is Sec-independent protein translocase protein TatB.